The sequence spans 868 residues: Leucine--tRNA ligase (868 aa).

The short motif at Pro42 to His52 is the 'HIGH' region element. The 'KMSKS' region motif lies at Lys627–Ser631. An ATP-binding site is contributed by Lys630.

The protein belongs to the class-I aminoacyl-tRNA synthetase family.

It is found in the cytoplasm. The catalysed reaction is tRNA(Leu) + L-leucine + ATP = L-leucyl-tRNA(Leu) + AMP + diphosphate. The polypeptide is Leucine--tRNA ligase (Pseudomonas fluorescens (strain Pf0-1)).